Reading from the N-terminus, the 958-residue chain is Glycine dehydrogenase (decarboxylating) (958 aa).

An N6-(pyridoxal phosphate)lysine modification is found at Lys-708.

Belongs to the GcvP family. As to quaternary structure, the glycine cleavage system is composed of four proteins: P, T, L and H. It depends on pyridoxal 5'-phosphate as a cofactor.

It catalyses the reaction N(6)-[(R)-lipoyl]-L-lysyl-[glycine-cleavage complex H protein] + glycine + H(+) = N(6)-[(R)-S(8)-aminomethyldihydrolipoyl]-L-lysyl-[glycine-cleavage complex H protein] + CO2. The glycine cleavage system catalyzes the degradation of glycine. The P protein binds the alpha-amino group of glycine through its pyridoxal phosphate cofactor; CO(2) is released and the remaining methylamine moiety is then transferred to the lipoamide cofactor of the H protein. The polypeptide is Glycine dehydrogenase (decarboxylating) (Photorhabdus laumondii subsp. laumondii (strain DSM 15139 / CIP 105565 / TT01) (Photorhabdus luminescens subsp. laumondii)).